Reading from the N-terminus, the 141-residue chain is VLSSADKANIKATWDKIGGHGGEYGAEALERTFLCFPTTKTYFPHFDLSHGSAQVKAHGKKVADALALAAAHLDDLPSALSALSDLHAYKLRVDPVNFKLLSHCLLVTLAAHHPAEFTPAVHSDLDKFLSSVSTVLTSKYR.

The Globin domain maps to 1 to 141 (VLSSADKANI…VSTVLTSKYR (141 aa)). S3 is modified (phosphoserine). N6-succinyllysine occurs at positions 7 and 11. K16 bears the N6-acetyllysine; alternate mark. K16 is modified (N6-succinyllysine; alternate). Y24 is modified (phosphotyrosine). K40 is subject to N6-succinyllysine. S49 carries the phosphoserine modification. H58 is a binding site for O2. H87 serves as a coordination point for heme b. A Phosphoserine modification is found at S102. Position 108 is a phosphothreonine (T108). The residue at position 131 (S131) is a Phosphoserine. T134 and T137 each carry phosphothreonine. Position 138 is a phosphoserine (S138).

It belongs to the globin family. Heterotetramer of two alpha chains and two beta chains. As to expression, red blood cells.

Functionally, involved in oxygen transport from the lung to the various peripheral tissues. Hemopressin acts as an antagonist peptide of the cannabinoid receptor CNR1. Hemopressin-binding efficiently blocks cannabinoid receptor CNR1 and subsequent signaling. The polypeptide is Hemoglobin subunit alpha (HBA) (Crocuta crocuta (Spotted hyena)).